Reading from the N-terminus, the 122-residue chain is Alpha-amylase/trypsin inhibitor (122 aa).

Intrachain disulfides connect Cys-6–Cys-55, Cys-20–Cys-44, Cys-29–Cys-85, Cys-45–Cys-103, and Cys-57–Cys-114.

This sequence belongs to the protease inhibitor I6 (cereal trypsin/alpha-amylase inhibitor) family. In terms of tissue distribution, seeds.

The protein localises to the secreted. In terms of biological role, may play a protective role against endo- and exogenous hydrolytic activities in the Ragi seeds. This chain is Alpha-amylase/trypsin inhibitor, found in Eleusine coracana (Indian finger millet).